The primary structure comprises 521 residues: U4/U6 small nuclear ribonucleoprotein Prp4 (521 aa).

K26 is modified (N6-acetyllysine). 7 WD repeats span residues 228–267 (GDDRPISYCHFSPNSKMLATACWSGLCKLWSVPDCSLLHT), 270–317 (GHNT…PVAD), 320–359 (GHTVRVARVMWHPSGRFLGTTCYDRSWRLWDLEAQEEILH), 362–401 (GHSMGVYDIAFHQDGSLAGTGGLDAFGRVWDLRTGRCIMF), 404–443 (GHLKEIYGINFSPNGYHIATGSGDNTCKVWDLRQRRCVYT), 446–486 (AHQN…PLKT), and 489–521 (GHEGKVMGLDISSDGQLIATCSYDRTFKLWMAE).

As to quaternary structure, component of the precatalytic spliceosome (spliceosome B complex). Component of the U4/U6-U5 tri-snRNP complex, a building block of the precatalytic spliceosome (spliceosome B complex). The U4/U6-U5 tri-snRNP complex is composed of the U4, U6 and U5 snRNAs and at least PRPF3, PRPF4, PRPF6, PRPF8, PRPF31, SNRNP200, TXNL4A, SNRNP40, SNRPB, SNRPD1, SNRPD2, SNRPD3, SNRPE, SNRPF, SNRPG, DDX23, CD2BP2, PPIH, SNU13, EFTUD2, SART1 and USP39, plus LSM2, LSM3, LSM4, LSM5, LSM6, LSM7 and LSM8. Interacts directly with PRPF18, PPIH and PRPF3. Part of a heteromeric complex containing PPIH, PRPF3 and PRPF4 that is stable in the absence of RNA. Interacts with ERCC6.

It localises to the nucleus. Its subcellular location is the nucleus speckle. Plays a role in pre-mRNA splicing as component of the U4/U6-U5 tri-snRNP complex that is involved in spliceosome assembly, and as component of the precatalytic spliceosome (spliceosome B complex). This Mus musculus (Mouse) protein is U4/U6 small nuclear ribonucleoprotein Prp4 (Prpf4).